A 537-amino-acid polypeptide reads, in one-letter code: Phosphoenolpyruvate carboxykinase (ATP) (537 aa).

Positions 61, 195, and 201 each coordinate substrate. ATP contacts are provided by residues K201, H220, and 236–244; that span reads GLSGTGKTT. 2 residues coordinate Mn(2+): K201 and H220. A Mn(2+)-binding site is contributed by D257. ATP-binding residues include E285, R323, and T448. R323 serves as a coordination point for substrate.

It belongs to the phosphoenolpyruvate carboxykinase (ATP) family. Mn(2+) serves as cofactor.

It is found in the cytoplasm. The catalysed reaction is oxaloacetate + ATP = phosphoenolpyruvate + ADP + CO2. Its pathway is carbohydrate biosynthesis; gluconeogenesis. In terms of biological role, involved in the gluconeogenesis. Catalyzes the conversion of oxaloacetate (OAA) to phosphoenolpyruvate (PEP) through direct phosphoryl transfer between the nucleoside triphosphate and OAA. The chain is Phosphoenolpyruvate carboxykinase (ATP) from Parvibaculum lavamentivorans (strain DS-1 / DSM 13023 / NCIMB 13966).